We begin with the raw amino-acid sequence, 253 residues long: uncharacterized protein (253 aa).

8 residues coordinate NADP(+): isoleucine 17, serine 36, aspartate 62, asparagine 89, tyrosine 158, lysine 162, valine 191, and threonine 193. Tyrosine 158 (proton donor) is an active-site residue. Residue lysine 162 is the Lowers pKa of active site Tyr of the active site.

This sequence belongs to the short-chain dehydrogenases/reductases (SDR) family.

The protein localises to the cytoplasm. It localises to the nucleus. This is an uncharacterized protein from Schizosaccharomyces pombe (strain 972 / ATCC 24843) (Fission yeast).